Reading from the N-terminus, the 319-residue chain is Ribosomal RNA small subunit methyltransferase H (319 aa).

S-adenosyl-L-methionine is bound by residues glycine 38–histidine 40, aspartate 58, phenylalanine 82, aspartate 104, and glutamine 111.

It belongs to the methyltransferase superfamily. RsmH family.

It is found in the cytoplasm. The catalysed reaction is cytidine(1402) in 16S rRNA + S-adenosyl-L-methionine = N(4)-methylcytidine(1402) in 16S rRNA + S-adenosyl-L-homocysteine + H(+). Its function is as follows. Specifically methylates the N4 position of cytidine in position 1402 (C1402) of 16S rRNA. The sequence is that of Ribosomal RNA small subunit methyltransferase H from Histophilus somni (strain 129Pt) (Haemophilus somnus).